A 363-amino-acid polypeptide reads, in one-letter code: 3-dehydroquinate synthase (363 aa).

Residues 71–76, 105–109, 129–130, lysine 142, lysine 151, and 169–172 each bind NAD(+); these read DGEQYK, GVIGD, TT, and CLKT. The Zn(2+) site is built by glutamate 184, histidine 247, and histidine 264.

It belongs to the sugar phosphate cyclases superfamily. Dehydroquinate synthase family. NAD(+) is required as a cofactor. It depends on Co(2+) as a cofactor. The cofactor is Zn(2+).

It is found in the cytoplasm. The catalysed reaction is 7-phospho-2-dehydro-3-deoxy-D-arabino-heptonate = 3-dehydroquinate + phosphate. It participates in metabolic intermediate biosynthesis; chorismate biosynthesis; chorismate from D-erythrose 4-phosphate and phosphoenolpyruvate: step 2/7. Its function is as follows. Catalyzes the conversion of 3-deoxy-D-arabino-heptulosonate 7-phosphate (DAHP) to dehydroquinate (DHQ). In Vibrio vulnificus (strain CMCP6), this protein is 3-dehydroquinate synthase.